Consider the following 1070-residue polypeptide: DNA-directed RNA polymerase subunit beta (1070 aa).

It belongs to the RNA polymerase beta chain family. In terms of assembly, in plastids the minimal PEP RNA polymerase catalytic core is composed of four subunits: alpha, beta, beta', and beta''. When a (nuclear-encoded) sigma factor is associated with the core the holoenzyme is formed, which can initiate transcription.

It localises to the plastid. Its subcellular location is the chloroplast. The enzyme catalyses RNA(n) + a ribonucleoside 5'-triphosphate = RNA(n+1) + diphosphate. In terms of biological role, DNA-dependent RNA polymerase catalyzes the transcription of DNA into RNA using the four ribonucleoside triphosphates as substrates. The chain is DNA-directed RNA polymerase subunit beta from Populus alba (White poplar).